Here is a 131-residue protein sequence, read N- to C-terminus: L-ectoine synthase (131 aa).

Belongs to the ectoine synthase family.

The catalysed reaction is (2S)-4-acetamido-2-aminobutanoate = L-ectoine + H2O. It participates in amine and polyamine biosynthesis; ectoine biosynthesis; L-ectoine from L-aspartate 4-semialdehyde: step 3/3. Its function is as follows. Catalyzes the circularization of gamma-N-acetyl-alpha,gamma-diaminobutyric acid (ADABA) to ectoine (1,4,5,6-tetrahydro-2-methyl-4-pyrimidine carboxylic acid), which is an excellent osmoprotectant. The protein is L-ectoine synthase of Bordetella bronchiseptica (strain ATCC BAA-588 / NCTC 13252 / RB50) (Alcaligenes bronchisepticus).